The primary structure comprises 322 residues: ATP-dependent 6-phosphofructokinase (322 aa).

ATP is bound at residue Gly11. 21–25 is a binding site for ADP; sequence RAVTR. ATP-binding positions include 72–73 and 102–105; these read RC and GDGS. A Mg(2+)-binding site is contributed by Asp103. 127–129 provides a ligand contact to substrate; the sequence is TID. Asp129 functions as the Proton acceptor in the catalytic mechanism. Arg156 serves as a coordination point for ADP. Substrate contacts are provided by residues Arg164 and 171–173; that span reads MGR. Residues 187-189, Arg213, and 215-217 contribute to the ADP site; these read GAE and KKH. Substrate is bound by residues Glu224, Arg245, and 251–254; that span reads HIQR.

It belongs to the phosphofructokinase type A (PFKA) family. ATP-dependent PFK group I subfamily. Prokaryotic clade 'B1' sub-subfamily. Homotetramer. The cofactor is Mg(2+).

The protein localises to the cytoplasm. It carries out the reaction beta-D-fructose 6-phosphate + ATP = beta-D-fructose 1,6-bisphosphate + ADP + H(+). It functions in the pathway carbohydrate degradation; glycolysis; D-glyceraldehyde 3-phosphate and glycerone phosphate from D-glucose: step 3/4. Its activity is regulated as follows. Allosterically activated by ADP and other diphosphonucleosides, and allosterically inhibited by phosphoenolpyruvate. Its function is as follows. Catalyzes the phosphorylation of D-fructose 6-phosphate to fructose 1,6-bisphosphate by ATP, the first committing step of glycolysis. This chain is ATP-dependent 6-phosphofructokinase, found in Staphylococcus epidermidis (strain ATCC 35984 / DSM 28319 / BCRC 17069 / CCUG 31568 / BM 3577 / RP62A).